A 1480-amino-acid chain; its full sequence is UDP-N-acetylglucosamine--peptide N-acetylglucosaminyltransferase (1480 aa).

TPR repeat units follow at residues 38–71 (IFLY…SKQK), 113–146 (VQVL…STSN), 176–209 (ATIL…IKDP), and 288–321 (STIC…QPSF). Residues 468–485 (PQEKESPKSDKIASEKPL) show a composition bias toward basic and acidic residues. Residues 468 to 497 (PQEKESPKSDKIASEKPLVESNPGRSRTPS) form a disordered region. 2 TPR repeats span residues 613 to 646 (YEPF…NPRF) and 648 to 680 (DGYL…DPDN). Positions 1093–1128 (LSLDGSDATSSSVDSGIGSRTHSEAPIGGGDKDEGA) are disordered. Residues 1099 to 1112 (DATSSSVDSGIGSR) show a composition bias toward polar residues. Residues Q1269, K1272, 1333 to 1336 (HIRR), 1351 to 1353 (GST), and D1357 each bind UDP.

This sequence belongs to the glycosyltransferase 41 family. O-GlcNAc transferase subfamily.

The protein resides in the cytoplasm. It localises to the nucleus. It carries out the reaction L-seryl-[protein] + UDP-N-acetyl-alpha-D-glucosamine = 3-O-(N-acetyl-beta-D-glucosaminyl)-L-seryl-[protein] + UDP + H(+). It catalyses the reaction L-threonyl-[protein] + UDP-N-acetyl-alpha-D-glucosamine = 3-O-(N-acetyl-beta-D-glucosaminyl)-L-threonyl-[protein] + UDP + H(+). The protein operates within protein modification; protein glycosylation. Its function is as follows. Catalyzes the transfer of a single N-acetylglucosamine from UDP-GlcNAc to a serine or threonine residue in cytoplasmic and nuclear proteins resulting in their modification with a beta-linked N-acetylglucosamine (O-GlcNAc). This chain is UDP-N-acetylglucosamine--peptide N-acetylglucosaminyltransferase, found in Giardia intestinalis (strain ATCC 50803 / WB clone C6) (Giardia lamblia).